An 803-amino-acid polypeptide reads, in one-letter code: Bromodomain-containing protein 2 (803 aa).

The residue at position 1 (Met-1) is an N-acetylmethionine. The residue at position 6 (Thr-6) is a Phosphothreonine. Ser-37 is modified (phosphoserine). The tract at residues 53–73 is disordered; sequence ALQLTPANPPPPEVSNPKKPG. In terms of domain architecture, Bromo 1 spans 74–180; that stretch reads RVTNQLQYLH…KIFLQKVASM (107 aa). A protein contacts are provided by Asp-112, Tyr-155, Asn-156, Lys-157, Asp-160, and Asp-161. Disordered regions lie at residues 268 to 348, 456 to 652, and 739 to 803; these read PPAQ…KLSE, EPLE…KRQL, and EKRL…SDSG. The segment covering 285–298 has biased composition (low complexity); the sequence is TTTPTPTAILAPGS. Phosphoserine is present on residues Ser-298 and Ser-301. The segment covering 316–332 has biased composition (basic and acidic residues); the sequence is VRRESGRPIKPPRKDLP. In terms of domain architecture, Bromo 2 spans 344–453; that stretch reads GKLSEQLKHC…DVFEFRYAKM (110 aa). A compositionally biased stretch (acidic residues) spans 481 to 515; the sequence is SSEESSSESSSEEEEEEDEDEEEEEEESESSDSEE. The span at 545–567 shows a compositional bias: basic residues; it reads KPKRKREKKEKKKKRKAEKHRGR. A Nuclear localization signal motif is present at residues 556-560; it reads KKKRK. Residues 623 to 632 show a composition bias toward low complexity; it reads KTAPPALPAG. In terms of domain architecture, NET spans 634–716; the sequence is DSEEEEESRP…SCLRKKPRKP (83 aa). Ser-635 is modified (phosphoserine). Positions 641–652 are enriched in basic and acidic residues; the sequence is SRPMSYDEKRQL. A compositionally biased stretch (low complexity) spans 777–797; sequence SASSSSSDSSSSSSSSSSSDT.

It belongs to the BET family. Homodimer. Interacts with E2F1. Interacts with (acetylated) STAT3; promoting STAT3 recruitment to chromatin. Interacts with CTCF; promoting BRD2 recruitment to chromatin.

The protein resides in the nucleus. The protein localises to the chromosome. Its function is as follows. Chromatin reader protein that specifically recognizes and binds histone H4 acetylated at 'Lys-5' and 'Lys-12' (H4K5ac and H4K12ac, respectively), thereby controlling gene expression and remodeling chromatin structures. Recruits transcription factors and coactivators to target gene sites, and activates RNA polymerase II machinery for transcriptional elongation. Plays a key role in genome compartmentalization via its association with CTCF and cohesin: recruited to chromatin by CTCF and promotes formation of topologically associating domains (TADs) via its ability to bind acetylated histones, contributing to CTCF boundary formation and enhancer insulation. Also recognizes and binds acetylated non-histone proteins, such as STAT3. Involved in inflammatory response by regulating differentiation of naive CD4(+) T-cells into T-helper Th17: recognizes and binds STAT3 acetylated at 'Lys-87', promoting STAT3 recruitment to chromatin. In addition to acetylated lysines, also recognizes and binds lysine residues on histones that are both methylated and acetylated on the same side chain to form N6-acetyl-N6-methyllysine (Kacme), an epigenetic mark of active chromatin associated with increased transcriptional initiation. Specifically binds histone H4 acetyl-methylated at 'Lys-5' and 'Lys-12' (H4K5acme and H4K12acme, respectively). This chain is Bromodomain-containing protein 2 (BRD2), found in Bos taurus (Bovine).